A 202-amino-acid polypeptide reads, in one-letter code: Small ribosomal subunit protein uS4 (202 aa).

Residues 90–152 form the S4 RNA-binding domain; that stretch reads MRLDNTVFRL…ERSRRLVETN (63 aa).

It belongs to the universal ribosomal protein uS4 family. In terms of assembly, part of the 30S ribosomal subunit. Contacts protein S5. The interaction surface between S4 and S5 is involved in control of translational fidelity.

Functionally, one of the primary rRNA binding proteins, it binds directly to 16S rRNA where it nucleates assembly of the body of the 30S subunit. With S5 and S12 plays an important role in translational accuracy. In Thermosynechococcus vestitus (strain NIES-2133 / IAM M-273 / BP-1), this protein is Small ribosomal subunit protein uS4.